The chain runs to 486 residues: Acetyl-coenzyme A carboxylase carboxyl transferase subunit beta, chloroplastic (486 aa).

One can recognise a CoA carboxyltransferase N-terminal domain in the interval 224 to 486 (LWVQCENCYG…FQFHGFFPRP (263 aa)). Zn(2+) contacts are provided by Cys-228, Cys-231, Cys-247, and Cys-250. The C4-type zinc finger occupies 228-250 (CENCYGLNYKKFFSSKMNICEQC).

It belongs to the AccD/PCCB family. As to quaternary structure, acetyl-CoA carboxylase is a heterohexamer composed of biotin carboxyl carrier protein, biotin carboxylase and 2 subunits each of ACCase subunit alpha and ACCase plastid-coded subunit beta (accD). The cofactor is Zn(2+).

The protein localises to the plastid. Its subcellular location is the chloroplast stroma. It catalyses the reaction N(6)-carboxybiotinyl-L-lysyl-[protein] + acetyl-CoA = N(6)-biotinyl-L-lysyl-[protein] + malonyl-CoA. The protein operates within lipid metabolism; malonyl-CoA biosynthesis; malonyl-CoA from acetyl-CoA: step 1/1. Its function is as follows. Component of the acetyl coenzyme A carboxylase (ACC) complex. Biotin carboxylase (BC) catalyzes the carboxylation of biotin on its carrier protein (BCCP) and then the CO(2) group is transferred by the transcarboxylase to acetyl-CoA to form malonyl-CoA. This chain is Acetyl-coenzyme A carboxylase carboxyl transferase subunit beta, chloroplastic, found in Nymphaea alba (White water-lily).